The following is a 372-amino-acid chain: Actin-related protein T3 (372 aa).

This sequence belongs to the actin family. As to quaternary structure, interacts with PFN3. Ubiquitously expressed.

Its subcellular location is the cytoplasm. It is found in the cytoskeleton. The protein localises to the nucleus. This chain is Actin-related protein T3 (ACTRT3), found in Homo sapiens (Human).